A 571-amino-acid polypeptide reads, in one-letter code: Proline-rich protein 35 (571 aa).

Disordered regions lie at residues 1-27 (MSREAGSCRVGTGARARSRKPKKPHYI), 79-187 (GSTT…EGSV), 286-402 (APVS…GSPE), and 476-571 (GPQA…GAEV). Over residues 16 to 26 (ARSRKPKKPHY) the composition is skewed to basic residues. Gly residues predominate over residues 165-175 (GMGGDPRGVGA). A compositionally biased stretch (basic and acidic residues) spans 316-336 (TPRDPGQEGELERAAQSDPRR). Positions 351-367 (PSLTRFCSRSSLPTGSS) are enriched in polar residues. Residues 380 to 399 (PETPGPEGPLPLQPRGPVPG) show a composition bias toward pro residues.

This Homo sapiens (Human) protein is Proline-rich protein 35 (PRR35).